A 257-amino-acid polypeptide reads, in one-letter code: MPSLKISPSEAEKIQNYLVSSGFRKINAPYTLWALEGNGVKVYYYKTGSLLIQGKNSEKVLKEVLNLLEKKKLPGCDESGKGDIFGSLVLCCVCIPEENYLKVSSLNPRDTKRLSDKRVERLYLALKPLVKAYCYEIKPEEYNKLYRKFRNLNKMMTHFYKLLIERVKEECGVSEVVVDKYQPSNPFGEDVIFETEAERNLAVAVASIFARYKFLQSLKEVERELGIKIPKGTSKEVKELAKSLKNPERFIKLNFNV.

The 187-residue stretch at 71–257 (KKLPGCDESG…ERFIKLNFNV (187 aa)) folds into the RNase H type-2 domain. A divalent metal cation-binding residues include aspartate 77, glutamate 78, and aspartate 179.

This sequence belongs to the RNase HII family. RnhC subfamily. Mn(2+) is required as a cofactor. It depends on Mg(2+) as a cofactor.

It is found in the cytoplasm. The catalysed reaction is Endonucleolytic cleavage to 5'-phosphomonoester.. In terms of biological role, endonuclease that specifically degrades the RNA of RNA-DNA hybrids. The chain is Ribonuclease HIII (rnhC) from Aquifex aeolicus (strain VF5).